The sequence spans 235 residues: Leucyl/phenylalanyl-tRNA--protein transferase (235 aa).

Belongs to the L/F-transferase family.

The protein localises to the cytoplasm. It carries out the reaction N-terminal L-lysyl-[protein] + L-leucyl-tRNA(Leu) = N-terminal L-leucyl-L-lysyl-[protein] + tRNA(Leu) + H(+). It catalyses the reaction N-terminal L-arginyl-[protein] + L-leucyl-tRNA(Leu) = N-terminal L-leucyl-L-arginyl-[protein] + tRNA(Leu) + H(+). The catalysed reaction is L-phenylalanyl-tRNA(Phe) + an N-terminal L-alpha-aminoacyl-[protein] = an N-terminal L-phenylalanyl-L-alpha-aminoacyl-[protein] + tRNA(Phe). In terms of biological role, functions in the N-end rule pathway of protein degradation where it conjugates Leu, Phe and, less efficiently, Met from aminoacyl-tRNAs to the N-termini of proteins containing an N-terminal arginine or lysine. In Azoarcus sp. (strain BH72), this protein is Leucyl/phenylalanyl-tRNA--protein transferase.